Reading from the N-terminus, the 355-residue chain is Tetraacyldisaccharide 4'-kinase (355 aa).

Position 49–56 (49–56 (SAGGTGKT)) interacts with ATP.

The protein belongs to the LpxK family.

It carries out the reaction a lipid A disaccharide + ATP = a lipid IVA + ADP + H(+). It participates in glycolipid biosynthesis; lipid IV(A) biosynthesis; lipid IV(A) from (3R)-3-hydroxytetradecanoyl-[acyl-carrier-protein] and UDP-N-acetyl-alpha-D-glucosamine: step 6/6. Its function is as follows. Transfers the gamma-phosphate of ATP to the 4'-position of a tetraacyldisaccharide 1-phosphate intermediate (termed DS-1-P) to form tetraacyldisaccharide 1,4'-bis-phosphate (lipid IVA). The protein is Tetraacyldisaccharide 4'-kinase of Chlorobium phaeobacteroides (strain DSM 266 / SMG 266 / 2430).